Reading from the N-terminus, the 251-residue chain is Maleate isomerase (251 aa).

Residues Asn-14, 76-78 (CLV), Tyr-133, and Asn-163 contribute to the substrate site. The active-site Nucleophile is the Cys-76. Cys-76 carries the post-translational modification S-(2-succinyl)cysteine. Cys-194 acts as the Proton donor in catalysis. 195–196 (VQ) contacts substrate.

It belongs to the maleate isomerase family. In terms of assembly, homodimer.

The catalysed reaction is maleate = fumarate. Its function is as follows. Catalyzes cis-trans isomerization of the C2-C3 double bond in maleate to yield fumarate. Shows a strict specificity for maleate, with no activity detected toward structurally related substrates including citraconate, mesaconate, dimethylmaleate, and maleamide. This is Maleate isomerase from Nocardia farcinica (strain IFM 10152).